The chain runs to 372 residues: Glutamate 5-kinase (372 aa).

Lys14 provides a ligand contact to ATP. Residues Ser54, Asp141, and Asn153 each contribute to the substrate site. Residue 173–174 (TD) coordinates ATP. One can recognise a PUA domain in the interval 280–358 (RGTLVLDEGA…DAIVGVLGYM (79 aa)).

Belongs to the glutamate 5-kinase family.

It localises to the cytoplasm. It carries out the reaction L-glutamate + ATP = L-glutamyl 5-phosphate + ADP. It participates in amino-acid biosynthesis; L-proline biosynthesis; L-glutamate 5-semialdehyde from L-glutamate: step 1/2. Catalyzes the transfer of a phosphate group to glutamate to form L-glutamate 5-phosphate. The chain is Glutamate 5-kinase from Pseudomonas fluorescens (strain ATCC BAA-477 / NRRL B-23932 / Pf-5).